A 176-amino-acid polypeptide reads, in one-letter code: RNA pyrophosphohydrolase (176 aa).

One can recognise a Nudix hydrolase domain in the interval 6 to 149 (GYRPNVGIVI…KRDVYRRVMK (144 aa)). The Nudix box signature appears at 38 to 59 (GGINPGESAEQAMYRELFEEVG).

The protein belongs to the Nudix hydrolase family. RppH subfamily. It depends on a divalent metal cation as a cofactor.

Functionally, accelerates the degradation of transcripts by removing pyrophosphate from the 5'-end of triphosphorylated RNA, leading to a more labile monophosphorylated state that can stimulate subsequent ribonuclease cleavage. The protein is RNA pyrophosphohydrolase of Salmonella paratyphi C (strain RKS4594).